The chain runs to 182 residues: Adenylate kinase (182 aa).

12-17 contacts ATP; that stretch reads GAGKGT. Residues 32 to 61 form an NMP region; the sequence is STGDLLRTEVGAKTPLGQEAAAVMNRGELV. Residues T33, R38, 59 to 61, 85 to 88, and Q92 each bind AMP; these read ELV and GFPR. The LID stretch occupies residues 126–132; sequence SRGRSDD. An ATP-binding site is contributed by R127. AMP contacts are provided by R129 and R140. An ATP-binding site is contributed by G168.

This sequence belongs to the adenylate kinase family. Monomer.

Its subcellular location is the cytoplasm. It catalyses the reaction AMP + ATP = 2 ADP. The protein operates within purine metabolism; AMP biosynthesis via salvage pathway; AMP from ADP: step 1/1. Functionally, catalyzes the reversible transfer of the terminal phosphate group between ATP and AMP. Plays an important role in cellular energy homeostasis and in adenine nucleotide metabolism. This chain is Adenylate kinase, found in Prochlorococcus marinus (strain MIT 9313).